A 108-amino-acid polypeptide reads, in one-letter code: Class I hydrophobin eas (108 aa).

Positions 1–26 (MQFTSVFTILAIAMTAAAAPAEVVPR) are cleaved as a signal peptide. 4 disulfides stabilise this stretch: C35–C86, C44–C80, C45–C71, and C87–C106.

Belongs to the fungal hydrophobin family. As to quaternary structure, self-assembles to form functional amyloid fibrils called rodlets. Self-assembly into fibrillar rodlets occurs spontaneously at hydrophobic:hydrophilic interfaces and the rodlets further associate laterally to form amphipathic monolayers.

The protein resides in the secreted. It localises to the spore wall. In terms of biological role, aerial growth, conidiation, and dispersal of filamentous fungi in the environment rely upon a capability of their secreting small amphipathic proteins called hydrophobins (HPBs) with low sequence identity. Class I can self-assemble into an outermost layer of rodlet bundles on aerial cell surfaces, conferring cellular hydrophobicity that supports fungal growth, development and dispersal; whereas class II form highly ordered films at water-air interfaces through intermolecular interactions but contribute nothing to the rodlet structure. Eas is a class I hydrophobin that forms functional amyloid fibrils called rodlets that facilitate spore formation and dispersal. This Neurospora crassa (strain ATCC 24698 / 74-OR23-1A / CBS 708.71 / DSM 1257 / FGSC 987) protein is Class I hydrophobin eas.